Reading from the N-terminus, the 44-residue chain is Large ribosomal subunit protein bL34 (44 aa).

This sequence belongs to the bacterial ribosomal protein bL34 family.

This Neorickettsia sennetsu (strain ATCC VR-367 / Miyayama) (Ehrlichia sennetsu) protein is Large ribosomal subunit protein bL34.